Reading from the N-terminus, the 222-residue chain is Small ribosomal subunit protein eS1 (222 aa).

Belongs to the eukaryotic ribosomal protein eS1 family.

This Methanocaldococcus jannaschii (strain ATCC 43067 / DSM 2661 / JAL-1 / JCM 10045 / NBRC 100440) (Methanococcus jannaschii) protein is Small ribosomal subunit protein eS1.